The chain runs to 646 residues: UvrABC system protein B (646 aa).

A Helicase ATP-binding domain is found at 25 to 412; it reads NGIKAGMREQ…QNIVEQIIRP (388 aa). Residue 38–45 coordinates ATP; that stretch reads GVTGSGKT. Positions 91–114 match the Beta-hairpin motif; that stretch reads YYDFYQPEAYIPQTDTYIDKEASI. A Helicase C-terminal domain is found at 428-594; that stretch reads QVDDLLSEIR…STRRTLREEE (167 aa). Residues 611–646 form the UVR domain; sequence ELIIKDLEAEMRDAARNLEFERAARIRDRIMSLKSN.

This sequence belongs to the UvrB family. As to quaternary structure, forms a heterotetramer with UvrA during the search for lesions. Interacts with UvrC in an incision complex.

The protein resides in the cytoplasm. Functionally, the UvrABC repair system catalyzes the recognition and processing of DNA lesions. A damage recognition complex composed of 2 UvrA and 2 UvrB subunits scans DNA for abnormalities. Upon binding of the UvrA(2)B(2) complex to a putative damaged site, the DNA wraps around one UvrB monomer. DNA wrap is dependent on ATP binding by UvrB and probably causes local melting of the DNA helix, facilitating insertion of UvrB beta-hairpin between the DNA strands. Then UvrB probes one DNA strand for the presence of a lesion. If a lesion is found the UvrA subunits dissociate and the UvrB-DNA preincision complex is formed. This complex is subsequently bound by UvrC and the second UvrB is released. If no lesion is found, the DNA wraps around the other UvrB subunit that will check the other stand for damage. The chain is UvrABC system protein B from Methanothermobacter thermautotrophicus (strain ATCC 29096 / DSM 1053 / JCM 10044 / NBRC 100330 / Delta H) (Methanobacterium thermoautotrophicum).